Consider the following 174-residue polypeptide: Ribosome maturation factor RimM (174 aa).

Positions Ser-97–Leu-171 constitute a PRC barrel domain.

Belongs to the RimM family. Binds ribosomal protein uS19.

The protein localises to the cytoplasm. An accessory protein needed during the final step in the assembly of 30S ribosomal subunit, possibly for assembly of the head region. Essential for efficient processing of 16S rRNA. May be needed both before and after RbfA during the maturation of 16S rRNA. It has affinity for free ribosomal 30S subunits but not for 70S ribosomes. The sequence is that of Ribosome maturation factor RimM from Geotalea daltonii (strain DSM 22248 / JCM 15807 / FRC-32) (Geobacter daltonii).